Consider the following 602-residue polypeptide: Serine/threonine-protein phosphatase 2A 56 kDa regulatory subunit delta isoform (602 aa).

The span at 1–13 (MPYKLKKEKEPPK) shows a compositional bias: basic and acidic residues. A disordered region spans residues 1–96 (MPYKLKKEKE…QSSSRFNLSK (96 aa)). 5 consecutive repeat copies span residues 37 to 38 (QP), 39 to 40 (QP), 41 to 42 (QP), 43 to 44 (QP), and 45 to 46 (QP). Positions 37-52 (QPQPQPQPQPQAQSQP) are 8 X 2 AA approximate tandem repeats of Q-P. Residues 46 to 55 (PQAQSQPPSS) show a composition bias toward low complexity. Residues 47 to 48 (QA) form a 6; approximate repeat. One copy of the 7; approximate repeat lies at 49–50 (QS). Copy 8 of the repeat occupies 51-52 (QP). A Phosphothreonine modification is found at threonine 63. Phosphoserine occurs at positions 88, 89, and 90. An SH3-binding; class I motif is present at residues 523-530 (RAPPPLPP). The short motif at 548–565 (KRTVETEAVQMLKDIKKE) is the Nuclear localization signal element. A phosphoserine mark is found at serine 573 and serine 598.

The protein belongs to the phosphatase 2A regulatory subunit B56 family. In terms of assembly, PP2A consists of a common heterodimeric core enzyme, composed of a 36 kDa catalytic subunit (subunit C) and a 65 kDa constant regulatory subunit (PR65 or subunit A), that associates with a variety of regulatory subunits. Proteins that associate with the core dimer include three families of regulatory subunits B (the R2/B/PR55/B55, R3/B''/PR72/PR130/PR59 and R5/B'/B56 families), the 48 kDa variable regulatory subunit, viral proteins, and cell signaling molecules. Interacts with the PP2A A subunit PPP2R1A. Interacts with SGO1. Interacts with ADCY8. In terms of tissue distribution, isoform Delta-2 is widely expressed. Isoform Delta-1 is highly expressed in brain.

It is found in the cytoplasm. Its subcellular location is the nucleus. The B regulatory subunit might modulate substrate selectivity and catalytic activity, and might also direct the localization of the catalytic enzyme to a particular subcellular compartment. The sequence is that of Serine/threonine-protein phosphatase 2A 56 kDa regulatory subunit delta isoform (PPP2R5D) from Homo sapiens (Human).